A 322-amino-acid chain; its full sequence is Lung adenoma susceptibility protein 2 homolog (322 aa).

An N-terminal signal peptide occupies residues 1–31 (MAKSKTKHRLCSRESSVSSLLASCSLSDSNS). Positions 148 to 157 (TNKKNKKCHG) are enriched in basic residues. Disordered stretches follow at residues 148-175 (TNKK…GPST) and 228-248 (FKSP…RAKS). Position 161 is a phosphoserine (Ser161). Over residues 236 to 247 (SDDSPQQTSRAK) the composition is skewed to polar residues.

The protein resides in the secreted. Might play a role in cell proliferation. The polypeptide is Lung adenoma susceptibility protein 2 homolog (LAS2) (Macaca fascicularis (Crab-eating macaque)).